The following is a 570-amino-acid chain: Protein B602L (570 aa).

20 repeat units span residues 161-164 (CADT), 165-168 (NAST), 169-172 (SADT), 173-176 (NAST), 177-180 (CADT), 181-184 (NVDT), 185-188 (CAST), 189-192 (CADT), 193-196 (NVDT), 197-200 (CADT), 201-204 (CAST), 205-208 (CAST), 209-212 (CAST), 213-216 (CAST), 217-220 (CADT), 221-224 (NVDT), 225-228 (CADT), 229-232 (CVST), 233-236 (CAST), and 237-240 (CANT). The interval 161–240 (CADTNASTSA…STCASTCANT (80 aa)) is 20 X 4 AA tandem repeats of [CNS]-[ATV]-[DNS]-T.

The protein belongs to the asfivirus B602L family.

The protein localises to the host cytoplasm. Its function is as follows. Plays an essential role in the assembly of the icosahedral capsid of the virus. Allows the assembly of 3 molecules of hexon protein p72 and formation of a thermostable trimer. The sequence is that of Protein B602L from African swine fever virus (isolate Tick/South Africa/Pretoriuskop Pr4/1996) (ASFV).